We begin with the raw amino-acid sequence, 253 residues long: Hydroxyacylglutathione hydrolase (253 aa).

Residues H59, H61, D63, H64, H118, D143, and H181 each contribute to the Zn(2+) site.

The protein belongs to the metallo-beta-lactamase superfamily. Glyoxalase II family. As to quaternary structure, monomer. Zn(2+) serves as cofactor.

It carries out the reaction an S-(2-hydroxyacyl)glutathione + H2O = a 2-hydroxy carboxylate + glutathione + H(+). Its pathway is secondary metabolite metabolism; methylglyoxal degradation; (R)-lactate from methylglyoxal: step 2/2. Its function is as follows. Thiolesterase that catalyzes the hydrolysis of S-D-lactoyl-glutathione to form glutathione and D-lactic acid. This Prochlorococcus marinus (strain SARG / CCMP1375 / SS120) protein is Hydroxyacylglutathione hydrolase.